The primary structure comprises 410 residues: Multifunctional CCA protein (410 aa).

The ATP site is built by G8 and R11. Residues G8 and R11 each contribute to the CTP site. Positions 21 and 23 each coordinate Mg(2+). 3 residues coordinate ATP: R91, R137, and R140. Residues R91, R137, and R140 each contribute to the CTP site. Residues 228-329 (TLLHQFLCLK…WKLFKSLDIL (102 aa)) form the HD domain.

The protein belongs to the tRNA nucleotidyltransferase/poly(A) polymerase family. Bacterial CCA-adding enzyme type 1 subfamily. In terms of assembly, monomer. Can also form homodimers and oligomers. Mg(2+) serves as cofactor. Ni(2+) is required as a cofactor.

It catalyses the reaction a tRNA precursor + 2 CTP + ATP = a tRNA with a 3' CCA end + 3 diphosphate. The enzyme catalyses a tRNA with a 3' CCA end + 2 CTP + ATP = a tRNA with a 3' CCACCA end + 3 diphosphate. Its function is as follows. Catalyzes the addition and repair of the essential 3'-terminal CCA sequence in tRNAs without using a nucleic acid template. Adds these three nucleotides in the order of C, C, and A to the tRNA nucleotide-73, using CTP and ATP as substrates and producing inorganic pyrophosphate. tRNA 3'-terminal CCA addition is required both for tRNA processing and repair. Also involved in tRNA surveillance by mediating tandem CCA addition to generate a CCACCA at the 3' terminus of unstable tRNAs. While stable tRNAs receive only 3'-terminal CCA, unstable tRNAs are marked with CCACCA and rapidly degraded. This is Multifunctional CCA protein from Alcanivorax borkumensis (strain ATCC 700651 / DSM 11573 / NCIMB 13689 / SK2).